The sequence spans 224 residues: Respiratory supercomplex factor 2, mitochondrial (224 aa).

Topologically, residues 1-13 (MKILTQDEIEAHR) are mitochondrial intermembrane. A helical membrane pass occupies residues 14–38 (SHTLKGGIEGALAGFAISAIIFKVL). Over 39–47 (PRRYPKFKP) the chain is Mitochondrial matrix. The chain crosses the membrane as a helical span at residues 48-75 (STLTWSIKTALWITPPTVLTAICAEEAS). Over 76-103 (NNFDATMYGSGSSSEDALDEHRRWKSLS) the chain is Mitochondrial intermembrane. Residues 89 to 180 (SEDALDEHRR…YENKLHPNKQ (92 aa)) form the HIG1 domain. The chain crosses the membrane as a helical span at residues 104–133 (TKDKFVEGLSNNKYKIITGAWAASLYGSWV). The Mitochondrial matrix segment spans residues 134-142 (IVNKDPIMT). A helical membrane pass occupies residues 143 to 173 (KAQKIVQARMYAQFITVGLLLASVGLSMYEN). Residues 174–184 (KLHPNKQKVNE) are Mitochondrial intermembrane-facing. Residues 185-204 (MRRWENALRVAEEEERLEKE) traverse the membrane as a helical segment. Residues 205 to 224 (GRRTGYVSNEERINSKIFKS) are Mitochondrial matrix-facing.

In terms of assembly, associates with a subpopulation of the cytochrome bc1-cytochrome c oxidase supercomplexes. Associates in substoichiometric amounts with complex IV. Interacts with COX3.

It is found in the mitochondrion membrane. Assembly factor that plays a role in the assembly of the respiratory chain supercomplexes (SCs) composed of ubiquinol-cytochrome c oxidoreductase (cytochrome b-c1 complex, complex III, CIII) and cytochrome c oxidase (complex IV, CIV). May be required for late-stage assembly of the COX12 and COX13 subunits. Required for the generation and maintenance of a normal proton motive force (PMF) across the inner mitochondrial membrane (IMM) by preventing proton leakage through an inactive population of CIV that accumulates when RCF1 and/or RCF2 proteins are absent. In Saccharomyces cerevisiae (strain ATCC 204508 / S288c) (Baker's yeast), this protein is Respiratory supercomplex factor 2, mitochondrial (RCF2).